Reading from the N-terminus, the 391-residue chain is Xylose isomerase (391 aa).

Residues H54 and D57 contribute to the active site. 7 residues coordinate Mg(2+): E181, E217, H220, D245, D255, D257, and D287.

This sequence belongs to the xylose isomerase family. Homotetramer. Requires Mg(2+) as cofactor.

The protein localises to the cytoplasm. It catalyses the reaction alpha-D-xylose = alpha-D-xylulofuranose. Functionally, involved in D-xylose catabolism. The chain is Xylose isomerase (xylA) from Streptomyces albus G.